The chain runs to 111 residues: Large ribosomal subunit protein uL24 (111 aa).

The protein belongs to the universal ribosomal protein uL24 family. As to quaternary structure, part of the 50S ribosomal subunit.

Functionally, one of two assembly initiator proteins, it binds directly to the 5'-end of the 23S rRNA, where it nucleates assembly of the 50S subunit. One of the proteins that surrounds the polypeptide exit tunnel on the outside of the subunit. This Heliobacterium modesticaldum (strain ATCC 51547 / Ice1) protein is Large ribosomal subunit protein uL24.